The following is a 291-amino-acid chain: Protein pxr1 (291 aa).

A compositionally biased stretch (basic residues) spans 1–11 (MGLAAPRKRTK). Disordered stretches follow at residues 1-26 (MGLA…RSTD) and 146-268 (LVPP…FRGR). Polar residues-rich tracts occupy residues 15-25 (DPNNTTWSRST) and 146-156 (LVPPTSQNGQA). Residues 25-79 (TDGFGHRILKAQGWTPGSFLGPRNAAHSDLFTTASASHIRVVLKDDNLGLGARPK) form the G-patch domain. Basic and acidic residues predominate over residues 194–205 (ETNSRGSREKER). Residues 206 to 219 (KREKRQMRRDKKRK) are compositionally biased toward basic residues. A compositionally biased stretch (basic and acidic residues) spans 230–247 (MQEKTRVQGPSEDVKPTE).

The protein belongs to the PINX1 family.

Its subcellular location is the nucleus. The protein resides in the nucleolus. Functionally, involved in rRNA-processing at A0, A1 and A2 sites and negatively regulates telomerase. The polypeptide is Protein pxr1 (pxr1) (Aspergillus clavatus (strain ATCC 1007 / CBS 513.65 / DSM 816 / NCTC 3887 / NRRL 1 / QM 1276 / 107)).